The sequence spans 180 residues: Ribosome maturation factor RimM (180 aa).

Residues 99-179 (NNEYYWKDIV…IVIKNWKQTF (81 aa)) form the PRC barrel domain.

This sequence belongs to the RimM family. As to quaternary structure, binds ribosomal protein uS19.

Its subcellular location is the cytoplasm. In terms of biological role, an accessory protein needed during the final step in the assembly of 30S ribosomal subunit, possibly for assembly of the head region. Essential for efficient processing of 16S rRNA. May be needed both before and after RbfA during the maturation of 16S rRNA. It has affinity for free ribosomal 30S subunits but not for 70S ribosomes. The chain is Ribosome maturation factor RimM from Buchnera aphidicola subsp. Baizongia pistaciae (strain Bp).